Here is a 598-residue protein sequence, read N- to C-terminus: MPCVQAQYGSSPQGASPASQSYSYHSSGEYSSDFLTPEFVKFSMDLTNTEITATTSLPSFSTFMDNYSTGYDVKPPCLYQMPLSGQQSSIKVEDIQMHNYQQHSHLPPQSEEMMPHSGSVYYKPSSPPTPTTPGFQVQHSPMWDDPGSLHNFHQNYVATTHMIEQRKTPVSRLSLFSFKQSPPGTPVSSCQMRFDGPLHVPMNPEPAGSHHVVDGQTFAVPNPIRKPASMGFPGLQIGHASQLLDTQVPSPPSRGSPSNEGLCAVCGDNAACQHYGVRTCEGCKGFFKRTVQKNAKYVCLANKNCPVDKRRRNRCQYCRFQKCLAVGMVKEVVRTDSLKGRRGRLPSKPKSPQEPSPPSPPVSLISALVRAHVDSNPAMTSLDYSRFQANPDYQMSGDDTQHIQQFYDLLTGSMEIIRGWAEKIPGFADLPKADQDLLFESAFLELFVLRLAYRSNPVEGKLIFCNGVVLHRLQCVRGFGEWIDSIVEFSSNLQNMNIDISAFSCIAALAMVTERHGLKEPKRVEELQNKIVNCLKDHVTFNNGGLNRPNYLSKLLGKLPELRTLCTQGLQRIFYLKLEDLVPPPAIIDKLFLDTLPF.

The tract at residues 1–22 (MPCVQAQYGSSPQGASPASQSY) is disordered. The segment covering 8-22 (YGSSPQGASPASQSY) has biased composition (low complexity). Positions 260 to 335 (EGLCAVCGDN…VGMVKEVVRT (76 aa)) form a DNA-binding region, nuclear receptor. 2 consecutive NR C4-type zinc fingers follow at residues 263–283 (CAVC…CEGC) and 299–323 (CLAN…FQKC). The short motif at 287-314 (FKRTVQKNAKYVCLANKNCPVDKRRRNR) is the Bipartite nuclear localization signal (NLS1) element. Residues 337-361 (SLKGRRGRLPSKPKSPQEPSPPSPP) form a disordered region. The short motif at 338–350 (LKGRRGRLPSKPK) is the Nuclear localization signal (NLS1) element. The span at 352–361 (PQEPSPPSPP) shows a compositional bias: pro residues. The NR LBD domain maps to 360 to 595 (PPVSLISALV…AIIDKLFLDT (236 aa)). Positions 443-452 (FLELFVLRLA) match the nuclear export sequence (NES1) motif. The nuclear export sequence (NES2) signature appears at 568–577 (QGLQRIFYLK).

This sequence belongs to the nuclear hormone receptor family. NR4 subfamily. In terms of assembly, interacts with SFPQ, NCOR2, SIN3A and HADC1. The interaction with NCOR2 increases in the absence of PITX3. Interacts with PER2. Expressed in a number of cell lines of T-cell, B-cell and fibroblast origin. Strong expression in brain tissue.

It localises to the cytoplasm. The protein resides in the nucleus. Transcriptional regulator which is important for the differentiation and maintenance of meso-diencephalic dopaminergic (mdDA) neurons during development. It is crucial for expression of a set of genes such as SLC6A3, SLC18A2, TH and DRD2 which are essential for development of mdDA neurons. In Homo sapiens (Human), this protein is Nuclear receptor subfamily 4 group A member 2 (NR4A2).